A 732-amino-acid chain; its full sequence is Cyclopenase asqI (732 aa).

The Zn(2+) site is built by His-168, His-172, and His-200.

The protein belongs to the tyrosinase family. Zn(2+) is required as a cofactor.

The catalysed reaction is (-)-cyclopenine = viridicatin + methyl isocyanate + H(+). It catalyses the reaction (-)-4'-methoxycyclopenine = 4'-methoxyviridicatin + methyl isocyanate + H(+). It functions in the pathway secondary metabolite biosynthesis. The protein operates within alkaloid biosynthesis. Its pathway is mycotoxin biosynthesis. Functionally, cyclopenase; part of the gene cluster that mediates the biosynthesis of the aspoquinolone mycotoxins. Within the pathway, the cyclopenase asqI catalyzes the conversion of 4'-methoxycyclopenin into 4'-methoxyviridicatin. Cyclopenin can also be converted into viridicatin by asqI. The first step of the pathway is catalyzed by the nonribosomal peptide synthetase asqK that condenses anthranilic acid and O-methyl-L-tyrosine to produce 4'-methoxycyclopeptin. 4'-methoxycyclopeptin is then converted to 4'-methoxydehydrocyclopeptin by the ketoglutarate-dependent dioxygenase asqJ. AsqJ also converts its first product 4'-methoxydehydrocyclopeptin to 4'-methoxycyclopenin. The following conversion of 4'-methoxycyclopenin into 4'-methoxyviridicatin is catalyzed by the cyclopenase asqI. 4'-methoxyviridicatin is the precursor of quinolone natural products, and is further converted to quinolinone B. The prenyltransferase asqH1 then catalyzes the canonical Friedel-Crafts alkylation of quinolinone B with dimethylallyl cation to yield dimethylallyl quinolone, which is subjected to FAD-dependent dehydrogenation by the FAD-linked oxidoreductase asqF to yield conjugated aryl diene. The delta(3') double bond then serves as the site of the second alkylation with DMAPP catalyzed by the prenyltransferase asqH2 to yield a carbenium ion intermediate, which can be attacked by H(2)O to yield a styrenyl quinolone containing a C3'-hydroxyprenyl chain. The FAD-dependent monooxygenase asqG performs epoxidation of the terminal C7'-C8' olefin. Finally, after dehydratation of the epoxide at C3 by asqC, the quinolone epoxide rearrangement protein asqO catalyzes an enzymatic 3-exo-tet cyclization to yield the cyclopropyl-THF ring system in aspoquinolone. The protein is Cyclopenase asqI of Emericella nidulans (strain FGSC A4 / ATCC 38163 / CBS 112.46 / NRRL 194 / M139) (Aspergillus nidulans).